The sequence spans 159 residues: ATP synthase subunit b (159 aa).

A helical membrane pass occupies residues 2–22; sequence NISIPQIIAAILNFIILLLIV.

This sequence belongs to the ATPase B chain family. In terms of assembly, F-type ATPases have 2 components, F(1) - the catalytic core - and F(0) - the membrane proton channel. F(1) has five subunits: alpha(3), beta(3), gamma(1), delta(1), epsilon(1). F(0) has three main subunits: a(1), b(2) and c(10-14). The alpha and beta chains form an alternating ring which encloses part of the gamma chain. F(1) is attached to F(0) by a central stalk formed by the gamma and epsilon chains, while a peripheral stalk is formed by the delta and b chains.

The protein resides in the cell membrane. In terms of biological role, f(1)F(0) ATP synthase produces ATP from ADP in the presence of a proton or sodium gradient. F-type ATPases consist of two structural domains, F(1) containing the extramembraneous catalytic core and F(0) containing the membrane proton channel, linked together by a central stalk and a peripheral stalk. During catalysis, ATP synthesis in the catalytic domain of F(1) is coupled via a rotary mechanism of the central stalk subunits to proton translocation. Component of the F(0) channel, it forms part of the peripheral stalk, linking F(1) to F(0). The protein is ATP synthase subunit b of Clostridium botulinum (strain Loch Maree / Type A3).